The chain runs to 150 residues: Protein SprT-like (150 aa).

The SprT-like domain occupies 6–147; the sequence is LQKLTEDISE…CGKCRGKIKR (142 aa). Zn(2+) is bound at residue H67. E68 is a catalytic residue. H71 lines the Zn(2+) pocket.

The protein belongs to the SprT family. Zn(2+) is required as a cofactor.

It is found in the cytoplasm. The polypeptide is Protein SprT-like (ydcK) (Bacillus subtilis (strain 168)).